The sequence spans 272 residues: Putative phosphoenolpyruvate synthase regulatory protein (272 aa).

152-159 contacts ADP; sequence GVSRCGKT.

It belongs to the pyruvate, phosphate/water dikinase regulatory protein family. PSRP subfamily.

It catalyses the reaction [pyruvate, water dikinase] + ADP = [pyruvate, water dikinase]-phosphate + AMP + H(+). The enzyme catalyses [pyruvate, water dikinase]-phosphate + phosphate + H(+) = [pyruvate, water dikinase] + diphosphate. Its function is as follows. Bifunctional serine/threonine kinase and phosphorylase involved in the regulation of the phosphoenolpyruvate synthase (PEPS) by catalyzing its phosphorylation/dephosphorylation. The polypeptide is Putative phosphoenolpyruvate synthase regulatory protein (Pseudomonas putida (strain W619)).